The chain runs to 673 residues: Flotillin family inner membrane protein sll1021 (673 aa).

A helical membrane pass occupies residues 60-80 (LLFFPVVIIAVIFLILVTIFL). The tract at residues 639-673 (LQDPPSVSPPSAAVSEDDWPDLAPPTETNFSPEEI) is disordered. Positions 664–673 (TETNFSPEEI) are enriched in polar residues.

The protein belongs to the band 7/mec-2 family. Flotillin subfamily. As to quaternary structure, homooligomerizes.

The protein resides in the cell inner membrane. The protein localises to the membrane raft. Found in functional membrane microdomains (FMM) that may be equivalent to eukaryotic membrane rafts. FMMs are highly dynamic and increase in number as cells age. Flotillins are thought to be important factors in membrane fluidity. This is Flotillin family inner membrane protein sll1021 from Synechocystis sp. (strain ATCC 27184 / PCC 6803 / Kazusa).